The sequence spans 258 residues: Transmembrane O-methyltransferase homolog (258 aa).

Residues Glu104, 106–107, Ser112, Glu130, and Ser160 each bind S-adenosyl-L-methionine; that span reads GT.

This sequence belongs to the class I-like SAM-binding methyltransferase superfamily. Cation-dependent O-methyltransferase family. As to quaternary structure, interacts with LHFPL5, PCDH15, TMC1, TMC2 and TMIE. The interaction of TOMT with TMC1 and TMC2 is required for the transportation of TMC1/2 into the stereocilia of hair cells. Interacts directly with TMC1. Widely expressed with high levels in outer and inner hair cells of the cochlea and vestibule.

It localises to the cytoplasm. The protein localises to the endoplasmic reticulum. It catalyses the reaction a catechol + S-adenosyl-L-methionine = a guaiacol + S-adenosyl-L-homocysteine + H(+). Functionally, catalyzes the O-methylation, and thereby the inactivation, of catecholamine neurotransmitters and catechol hormones. Required for auditory function. Component of the cochlear hair cell's mechanotransduction (MET) machinery. Involved in the assembly of the asymmetric tip-link MET complex. Required for transportation of TMC1 and TMC2 proteins into the mechanically sensitive stereocilia of the hair cells. The function in MET is independent of the enzymatic activity. This Mus musculus (Mouse) protein is Transmembrane O-methyltransferase homolog.